The following is a 481-amino-acid chain: Small ribosomal subunit protein bS1 (481 aa).

4 S1 motif domains span residues 36 to 105, 123 to 188, 209 to 277, and 294 to 363; these read GDIV…LSKK, DEAV…LSRR, GTIR…LSLK, and GQIV…LSLK. The segment at 429–467 is disordered; that stretch reads TAQMEKFAAAEAAGRGADDQSSASSAPSEKTAGGSLASD. Residues 437-456 show a composition bias toward low complexity; sequence AAEAAGRGADDQSSASSAPS.

The protein belongs to the bacterial ribosomal protein bS1 family.

In terms of biological role, binds mRNA; thus facilitating recognition of the initiation point. It is needed to translate mRNA with a short Shine-Dalgarno (SD) purine-rich sequence. The protein is Small ribosomal subunit protein bS1 (rpsA) of Mycobacterium tuberculosis (strain CDC 1551 / Oshkosh).